A 218-amino-acid chain; its full sequence is Protein GrpE (218 aa).

Basic and acidic residues predominate over residues 1–21 (MSDKQREAERQQSEDKAHSEA). Positions 1 to 66 (MSDKQREAER…LEEARARAEE (66 aa)) are disordered. Positions 24 to 36 (AEAGQAPEAQAAE) are enriched in low complexity.

It belongs to the GrpE family. In terms of assembly, homodimer.

The protein resides in the cytoplasm. Functionally, participates actively in the response to hyperosmotic and heat shock by preventing the aggregation of stress-denatured proteins, in association with DnaK and GrpE. It is the nucleotide exchange factor for DnaK and may function as a thermosensor. Unfolded proteins bind initially to DnaJ; upon interaction with the DnaJ-bound protein, DnaK hydrolyzes its bound ATP, resulting in the formation of a stable complex. GrpE releases ADP from DnaK; ATP binding to DnaK triggers the release of the substrate protein, thus completing the reaction cycle. Several rounds of ATP-dependent interactions between DnaJ, DnaK and GrpE are required for fully efficient folding. The protein is Protein GrpE of Alkalilimnicola ehrlichii (strain ATCC BAA-1101 / DSM 17681 / MLHE-1).